A 135-amino-acid polypeptide reads, in one-letter code: Small ribosomal subunit protein uS8 (135 aa).

The protein belongs to the universal ribosomal protein uS8 family. As to quaternary structure, part of the 30S ribosomal subunit. Contacts proteins S5 and S12.

One of the primary rRNA binding proteins, it binds directly to 16S rRNA central domain where it helps coordinate assembly of the platform of the 30S subunit. The chain is Small ribosomal subunit protein uS8 from Cutibacterium acnes (strain DSM 16379 / KPA171202) (Propionibacterium acnes).